An 856-amino-acid polypeptide reads, in one-letter code: Glucans biosynthesis glucosyltransferase H (856 aa).

Helical transmembrane passes span 144–164 (ILLV…KGIM), 198–218 (ILIL…TALM), 517–537 (VFLT…FLVL), 574–594 (LFST…ILIW), 608–628 (TLSM…RMIF), and 684–704 (FLWW…VSVI).

The protein belongs to the glycosyltransferase 2 family. OpgH subfamily.

It localises to the cell inner membrane. It participates in glycan metabolism; osmoregulated periplasmic glucan (OPG) biosynthesis. Functionally, involved in the biosynthesis of osmoregulated periplasmic glucans (OPGs). The protein is Glucans biosynthesis glucosyltransferase H of Pseudomonas fluorescens (strain ATCC BAA-477 / NRRL B-23932 / Pf-5).